The chain runs to 422 residues: MAM and fibronectin type III domain-containing protein 1 (422 aa).

The MAM domain occupies 1 to 75 (KFYYHMYGAT…VSLMEGICAG (75 aa)). Fibronectin type-III domains lie at 2 to 74 (FYYH…GICA), 196 to 286 (PGWN…QART), and 291 to 386 (PSRA…YIVT).

Component of the acid-insoluble and acid-soluble organic matrix of the aragonitic skeleton (at protein level).

It is found in the secreted. In Acropora millepora (Staghorn coral), this protein is MAM and fibronectin type III domain-containing protein 1.